A 535-amino-acid polypeptide reads, in one-letter code: Bifunctional purine biosynthesis protein PurH (535 aa).

The MGS-like domain maps to 6-151 (TRLPIRRALI…KNHKDVAIVV (146 aa)).

Belongs to the PurH family.

The catalysed reaction is (6R)-10-formyltetrahydrofolate + 5-amino-1-(5-phospho-beta-D-ribosyl)imidazole-4-carboxamide = 5-formamido-1-(5-phospho-D-ribosyl)imidazole-4-carboxamide + (6S)-5,6,7,8-tetrahydrofolate. It catalyses the reaction IMP + H2O = 5-formamido-1-(5-phospho-D-ribosyl)imidazole-4-carboxamide. Its pathway is purine metabolism; IMP biosynthesis via de novo pathway; 5-formamido-1-(5-phospho-D-ribosyl)imidazole-4-carboxamide from 5-amino-1-(5-phospho-D-ribosyl)imidazole-4-carboxamide (10-formyl THF route): step 1/1. It functions in the pathway purine metabolism; IMP biosynthesis via de novo pathway; IMP from 5-formamido-1-(5-phospho-D-ribosyl)imidazole-4-carboxamide: step 1/1. In Pseudomonas aeruginosa (strain LESB58), this protein is Bifunctional purine biosynthesis protein PurH.